A 195-amino-acid chain; its full sequence is Imidazoleglycerol-phosphate dehydratase (195 aa).

Belongs to the imidazoleglycerol-phosphate dehydratase family.

The protein resides in the cytoplasm. The catalysed reaction is D-erythro-1-(imidazol-4-yl)glycerol 3-phosphate = 3-(imidazol-4-yl)-2-oxopropyl phosphate + H2O. Its pathway is amino-acid biosynthesis; L-histidine biosynthesis; L-histidine from 5-phospho-alpha-D-ribose 1-diphosphate: step 6/9. This is Imidazoleglycerol-phosphate dehydratase from Pelobacter propionicus (strain DSM 2379 / NBRC 103807 / OttBd1).